A 158-amino-acid chain; its full sequence is Cyclic pyranopterin monophosphate synthase (158 aa).

Substrate contacts are provided by residues 76–78 (LCH) and 114–115 (ME). Residue Asp-129 is part of the active site.

It belongs to the MoaC family. Homohexamer; trimer of dimers.

It carries out the reaction (8S)-3',8-cyclo-7,8-dihydroguanosine 5'-triphosphate = cyclic pyranopterin phosphate + diphosphate. It participates in cofactor biosynthesis; molybdopterin biosynthesis. Functionally, catalyzes the conversion of (8S)-3',8-cyclo-7,8-dihydroguanosine 5'-triphosphate to cyclic pyranopterin monophosphate (cPMP). The chain is Cyclic pyranopterin monophosphate synthase from Shewanella sediminis (strain HAW-EB3).